Here is a 214-residue protein sequence, read N- to C-terminus: Rac-like GTP-binding protein 1 (214 aa).

Residues 17 to 24, 20 to 25, Thr-42, 64 to 68, Gly-67, 122 to 125, 123 to 125, and 164 to 165 each bind GTP; these read GDGAVGKT, AVGKTC, DTAGQ, TKLD, KLD, and SK. Positions 39 to 47 match the Effector region motif; it reads YIPTVFDNF.

The protein belongs to the small GTPase superfamily. Rho family. As to quaternary structure, may interact with MPK1/MAPK6. Binds to RBOHB, preferentially in the GTP-bound form. Interacts with CCR1 in a GTP-dependent manner. May be palmitoylated.

Its subcellular location is the cytoplasm. The protein localises to the membrane. Small GTPase playing a general role in disease resistance signaling pathway. Acts downstream of heterotrimeric G protein alpha subunit. Regulates cell death and reactive oxygen species production, probably through NADPH oxidase. Also involved in sphingolipid elicitor (SE)-dependent defense signaling. Activates phytoalexin production and alters defense-related genes. Down-regulates metallothionein 2b, a reactive oxygen scavenger. May control lignin synthesis through regulation of both NADPH oxidase and CCR1 activities during defense responses. Stimulates lignin synthesis in suspension cell culture. This is Rac-like GTP-binding protein 1 (RAC1) from Oryza sativa subsp. japonica (Rice).